Here is a 312-residue protein sequence, read N- to C-terminus: Olfactory receptor-like protein COR2 (312 aa).

Topologically, residues methionine 1–proline 26 are extracellular. Asparagine 5 carries an N-linked (GlcNAc...) asparagine glycan. A helical transmembrane segment spans residues leucine 27–isoleucine 49. Topologically, residues glycine 50–threonine 57 are cytoplasmic. A helical membrane pass occupies residues proline 58–proline 79. At lysine 80–glutamine 100 the chain is on the extracellular side. Cysteine 97 and cysteine 179 form a disulfide bridge. The chain crosses the membrane as a helical span at residues tyrosine 101–tyrosine 120. Residues aspartate 121–alanine 139 lie on the Cytoplasmic side of the membrane. Residues valine 140–leucine 164 form a helical membrane-spanning segment. The Extracellular portion of the chain corresponds to lysine 165–leucine 205. The helical transmembrane segment at phenylalanine 206–valine 226 threads the bilayer. Topologically, residues methionine 227–serine 239 are cytoplasmic. A helical transmembrane segment spans residues threonine 240–leucine 260. Residues arginine 261–aspartate 271 lie on the Extracellular side of the membrane. The chain crosses the membrane as a helical span at residues lysine 272–tryptophan 292. Topologically, residues arginine 293–histidine 312 are cytoplasmic.

It belongs to the G-protein coupled receptor 1 family.

The protein resides in the cell membrane. Odorant receptor. This chain is Olfactory receptor-like protein COR2 (COR2), found in Gallus gallus (Chicken).